The chain runs to 1003 residues: Serine/threonine-protein kinase spk-1 (1003 aa).

3 disordered regions span residues 92-112 (NSTN…TQNE), 169-309 (NEND…SATS), and 337-408 (RPSI…KRGG). A compositionally biased stretch (acidic residues) spans 202–211 (SDEEDVESQD). Residues 248 to 265 (SNDDKNEKDVLVDEDTSK) are compositionally biased toward basic and acidic residues. Positions 285–300 (TIDSSVSSSTSSSSTG) are enriched in low complexity. Residues 346 to 359 (KKTEVNANEERLDD) show a composition bias toward basic and acidic residues. The region spanning 422–904 (YHVIRKLGWG…AKIALKHPFL (483 aa)) is the Protein kinase domain. ATP is bound by residues 428–436 (LGWGHFSTV) and Lys-451. The active-site Proton acceptor is Asp-555. The interval 927-1003 (DGLIPEPFDG…DIERFQLDLQ (77 aa)) is disordered. A compositionally biased stretch (basic and acidic residues) spans 936 to 953 (GNEHQEVYRDENDSRSAS). The segment covering 954–964 (ERSANSRSAGG) has biased composition (low complexity). The segment covering 983–992 (VITNNETTDI) has biased composition (polar residues). Residues 994 to 1003 (DIERFQLDLQ) are compositionally biased toward basic and acidic residues.

This sequence belongs to the protein kinase superfamily. Ser/Thr protein kinase family. As to quaternary structure, interacts with rsp-3. As to expression, predominantly coexpressed with rsp-3 in adult hermaphrodite germlines.

The enzyme catalyses L-seryl-[protein] + ATP = O-phospho-L-seryl-[protein] + ADP + H(+). It carries out the reaction L-threonyl-[protein] + ATP = O-phospho-L-threonyl-[protein] + ADP + H(+). Required for embryogenesis and germline development in both adult hermaphrodites and males. SR-protein kinase (SRPK) that binds directly to and phosphorylates the RS domain of rsp-3/CeSF2 in vitro. This Caenorhabditis elegans protein is Serine/threonine-protein kinase spk-1 (spk-1).